The following is a 541-amino-acid chain: CTP synthase (541 aa).

An amidoligase domain region spans residues 1 to 268 (MAKFIFITGG…AEIVCRRLGL (268 aa)). Ser13 lines the CTP pocket. Ser13 provides a ligand contact to UTP. ATP is bound by residues 14–19 (GLGKGI) and Asp71. Residues Asp71 and Glu141 each coordinate Mg(2+). CTP is bound by residues 148–150 (DIE), 189–194 (KTKPTQ), and Lys225. UTP is bound by residues 189–194 (KTKPTQ) and Lys225. In terms of domain architecture, Glutamine amidotransferase type-1 spans 293–539 (EIALVGKYVA…IKAALEYRAG (247 aa)). Gly359 is an L-glutamine binding site. The Nucleophile; for glutamine hydrolysis role is filled by Cys386. L-glutamine contacts are provided by residues 387–390 (MGMQ), Glu410, and Arg467. Catalysis depends on residues His512 and Glu514.

Belongs to the CTP synthase family. Homotetramer.

It carries out the reaction UTP + L-glutamine + ATP + H2O = CTP + L-glutamate + ADP + phosphate + 2 H(+). The catalysed reaction is L-glutamine + H2O = L-glutamate + NH4(+). The enzyme catalyses UTP + NH4(+) + ATP = CTP + ADP + phosphate + 2 H(+). The protein operates within pyrimidine metabolism; CTP biosynthesis via de novo pathway; CTP from UDP: step 2/2. With respect to regulation, allosterically activated by GTP, when glutamine is the substrate; GTP has no effect on the reaction when ammonia is the substrate. The allosteric effector GTP functions by stabilizing the protein conformation that binds the tetrahedral intermediate(s) formed during glutamine hydrolysis. Inhibited by the product CTP, via allosteric rather than competitive inhibition. Its function is as follows. Catalyzes the ATP-dependent amination of UTP to CTP with either L-glutamine or ammonia as the source of nitrogen. Regulates intracellular CTP levels through interactions with the four ribonucleotide triphosphates. This chain is CTP synthase, found in Symbiobacterium thermophilum (strain DSM 24528 / JCM 14929 / IAM 14863 / T).